Consider the following 570-residue polypeptide: Sulfite reductase [NADPH] hemoprotein beta-component (570 aa).

The [4Fe-4S] cluster site is built by C434, C440, C479, and C483. A siroheme-binding site is contributed by C483.

It belongs to the nitrite and sulfite reductase 4Fe-4S domain family. As to quaternary structure, alpha(8)-beta(8). The alpha component is a flavoprotein, the beta component is a hemoprotein. It depends on siroheme as a cofactor. [4Fe-4S] cluster serves as cofactor.

It catalyses the reaction hydrogen sulfide + 3 NADP(+) + 3 H2O = sulfite + 3 NADPH + 4 H(+). It functions in the pathway sulfur metabolism; hydrogen sulfide biosynthesis; hydrogen sulfide from sulfite (NADPH route): step 1/1. Its function is as follows. Component of the sulfite reductase complex that catalyzes the 6-electron reduction of sulfite to sulfide. This is one of several activities required for the biosynthesis of L-cysteine from sulfate. The polypeptide is Sulfite reductase [NADPH] hemoprotein beta-component (Salmonella paratyphi B (strain ATCC BAA-1250 / SPB7)).